The sequence spans 207 residues: Carbonic anhydrase 2 (207 aa).

Zn(2+)-binding residues include cysteine 51, aspartate 53, histidine 104, and cysteine 107.

It belongs to the beta-class carbonic anhydrase family. It depends on Zn(2+) as a cofactor.

It catalyses the reaction hydrogencarbonate + H(+) = CO2 + H2O. Catalyzes the reversible hydration of carbon dioxide to form bicarbonate. In Mycobacterium tuberculosis (strain CDC 1551 / Oshkosh), this protein is Carbonic anhydrase 2 (mtcA2).